Consider the following 500-residue polypeptide: Cysteine--tRNA ligase (500 aa).

Residue cysteine 29 participates in Zn(2+) binding. The 'HIGH' region signature appears at 31–41 (VTVYDLCHLGH). Zn(2+) is bound by residues cysteine 213, histidine 238, and glutamate 242. The short motif at 270-274 (KMSKS) is the 'KMSKS' region element. An ATP-binding site is contributed by lysine 273.

This sequence belongs to the class-I aminoacyl-tRNA synthetase family. In terms of assembly, monomer. The cofactor is Zn(2+).

It localises to the cytoplasm. The catalysed reaction is tRNA(Cys) + L-cysteine + ATP = L-cysteinyl-tRNA(Cys) + AMP + diphosphate. This is Cysteine--tRNA ligase from Prochlorococcus marinus (strain NATL2A).